The chain runs to 200 residues: Large ribosomal subunit protein uL4 (200 aa).

Residues 42 to 65 form a disordered region; sequence TRAQKTRSEVSGGGAKPWRQKGTG.

It belongs to the universal ribosomal protein uL4 family. In terms of assembly, part of the 50S ribosomal subunit.

In terms of biological role, one of the primary rRNA binding proteins, this protein initially binds near the 5'-end of the 23S rRNA. It is important during the early stages of 50S assembly. It makes multiple contacts with different domains of the 23S rRNA in the assembled 50S subunit and ribosome. Its function is as follows. Forms part of the polypeptide exit tunnel. The sequence is that of Large ribosomal subunit protein uL4 from Vibrio parahaemolyticus serotype O3:K6 (strain RIMD 2210633).